The chain runs to 173 residues: Crossover junction endodeoxyribonuclease RuvC (173 aa).

Active-site residues include Asp-8, Glu-67, and Asp-139. The Mg(2+) site is built by Asp-8, Glu-67, and Asp-139.

The protein belongs to the RuvC family. Homodimer which binds Holliday junction (HJ) DNA. The HJ becomes 2-fold symmetrical on binding to RuvC with unstacked arms; it has a different conformation from HJ DNA in complex with RuvA. In the full resolvosome a probable DNA-RuvA(4)-RuvB(12)-RuvC(2) complex forms which resolves the HJ. The cofactor is Mg(2+).

The protein resides in the cytoplasm. The enzyme catalyses Endonucleolytic cleavage at a junction such as a reciprocal single-stranded crossover between two homologous DNA duplexes (Holliday junction).. In terms of biological role, the RuvA-RuvB-RuvC complex processes Holliday junction (HJ) DNA during genetic recombination and DNA repair. Endonuclease that resolves HJ intermediates. Cleaves cruciform DNA by making single-stranded nicks across the HJ at symmetrical positions within the homologous arms, yielding a 5'-phosphate and a 3'-hydroxyl group; requires a central core of homology in the junction. The consensus cleavage sequence is 5'-(A/T)TT(C/G)-3'. Cleavage occurs on the 3'-side of the TT dinucleotide at the point of strand exchange. HJ branch migration catalyzed by RuvA-RuvB allows RuvC to scan DNA until it finds its consensus sequence, where it cleaves and resolves the cruciform DNA. In Aliivibrio salmonicida (strain LFI1238) (Vibrio salmonicida (strain LFI1238)), this protein is Crossover junction endodeoxyribonuclease RuvC.